An 82-amino-acid polypeptide reads, in one-letter code: Small ribosomal subunit protein bS18 (82 aa).

Belongs to the bacterial ribosomal protein bS18 family. As to quaternary structure, part of the 30S ribosomal subunit. Forms a tight heterodimer with protein bS6.

Functionally, binds as a heterodimer with protein bS6 to the central domain of the 16S rRNA, where it helps stabilize the platform of the 30S subunit. The sequence is that of Small ribosomal subunit protein bS18 from Chlamydia pneumoniae (Chlamydophila pneumoniae).